The primary structure comprises 825 residues: Interleukin-4 receptor subunit alpha (825 aa).

Residues 1-25 form the signal peptide; sequence MGWLCSGLLFPVSCLVLLQVASSGN. Residues 26-232 lie on the Extracellular side of the membrane; sequence MKVLQEPTCV…NSYREPFEQH (207 aa). Residues cysteine 34 and cysteine 44 are joined by a disulfide bond. Asparagine 53 carries an N-linked (GlcNAc...) asparagine glycan. Cysteines 74 and 86 form a disulfide. Asparagine 98, asparagine 128, asparagine 134, asparagine 176, and asparagine 209 each carry an N-linked (GlcNAc...) asparagine glycan. The region spanning 125-224 is the Fibronectin type-III domain; it reads APGNLTVHTN…WSPSTKWHNS (100 aa). Positions 212-216 match the WSXWS motif motif; that stretch reads WSEWS. A helical transmembrane segment spans residues 233–256; it reads LLLGVSVSCIVILAVCLLCYVSIT. Topologically, residues 257 to 825 are cytoplasmic; it reads KIKKEWWDQI…SVGPTYMRVS (569 aa). Positions 262–270 match the Box 1 motif motif; that stretch reads WWDQIPNPA. Disordered stretches follow at residues 373-397 and 433-485; these read EEEEVEEEKGSFCASPESSRDDFQE and LPPS…LTCT. Residues 437-557 are required for IRS1 activation and IL4-induced cell growth; the sequence is GSTSAHMPWD…ETWEQILRRN (121 aa). A compositionally biased stretch (polar residues) spans 475-485; that stretch reads PTQSPDNLTCT. Phosphotyrosine occurs at positions 497, 575, 603, and 631. Residues 558-657 form a required for IL4-induced gene expression region; the sequence is VLQHGAAAAP…VPVPLFTFGL (100 aa). The interval 651 to 703 is disordered; that stretch reads PLFTFGLDREPPRSPQSSHLPSSSPEHLGLEPGEKVEDMPKPPLPQEQATDPL. Residues 665 to 677 are compositionally biased toward low complexity; the sequence is PQSSHLPSSSPEH. Basic and acidic residues predominate over residues 678-690; the sequence is LGLEPGEKVEDMP. The ITIM motif motif lies at 711 to 716; the sequence is IVYSAL. The segment at 782 to 809 is disordered; the sequence is PSGISEKSKSSSSFHPAPGNAQSSSQTP.

Belongs to the type I cytokine receptor family. Type 4 subfamily. In terms of assembly, the functional IL4 receptor is formed by initial binding of IL4 to IL4R. Subsequent recruitment to the complex of the common gamma chain, in immune cells, creates a type I receptor and, in non-immune cells, of IL13RA1 forms a type II receptor. IL4R can also interact with the IL13/IL13RA1 complex to form a similar type II receptor. Interacts with PIK3C3. Interacts with the SH2-containing phosphatases, PTPN6/SHIP1, PTPN11/SHIP2 and INPP5D/SHIP. Interacts with JAK1 through a Box 1-containing region; inhibited by SOCS5. Interacts with SOCS5; inhibits IL4 signaling. Interacts with JAK3. Interacts with CLM1. Interacts with IL13RA2. On IL4 binding, phosphorylated on C-terminal tyrosine residues. Phosphorylation on any one of tyrosine residues, Tyr-575, Tyr-603 or Tyr-631, is required for STAT6-induced gene induction. In terms of processing, the soluble form (sIL4R/IL4BP) can also be produced by proteolytic cleavage at the cell surface (shedding) by a metalloproteinase. Isoform 1 and isoform 2 are highly expressed in activated T-cells.

It localises to the cell membrane. It is found in the secreted. Receptor for both interleukin 4 and interleukin 13. Couples to the JAK1/2/3-STAT6 pathway. The IL4 response is involved in promoting Th2 differentiation. The IL4/IL13 responses are involved in regulating IgE production and, chemokine and mucus production at sites of allergic inflammation. In certain cell types, can signal through activation of insulin receptor substrates, IRS1/IRS2. Its function is as follows. Soluble IL4R (sIL4R) inhibits IL4-mediated cell proliferation and IL5 up-regulation by T-cells. The polypeptide is Interleukin-4 receptor subunit alpha (IL4R) (Homo sapiens (Human)).